Reading from the N-terminus, the 739-residue chain is Phosphoribosylformylglycinamidine synthase subunit PurL (739 aa).

His-52 is a catalytic residue. ATP-binding residues include Tyr-55 and Lys-94. Glu-96 is a Mg(2+) binding site. Residues 97–100 (SHNH) and Arg-119 each bind substrate. His-98 acts as the Proton acceptor in catalysis. Asp-120 is a binding site for Mg(2+). Residue Gln-243 coordinates substrate. Asp-273 provides a ligand contact to Mg(2+). 317–319 (ESQ) contributes to the substrate binding site. Residues Asp-500 and Gly-537 each contribute to the ATP site. A Mg(2+)-binding site is contributed by Asn-538. Residue Ser-540 participates in substrate binding.

It belongs to the FGAMS family. As to quaternary structure, monomer. Part of the FGAM synthase complex composed of 1 PurL, 1 PurQ and 2 PurS subunits.

The protein localises to the cytoplasm. The enzyme catalyses N(2)-formyl-N(1)-(5-phospho-beta-D-ribosyl)glycinamide + L-glutamine + ATP + H2O = 2-formamido-N(1)-(5-O-phospho-beta-D-ribosyl)acetamidine + L-glutamate + ADP + phosphate + H(+). The protein operates within purine metabolism; IMP biosynthesis via de novo pathway; 5-amino-1-(5-phospho-D-ribosyl)imidazole from N(2)-formyl-N(1)-(5-phospho-D-ribosyl)glycinamide: step 1/2. In terms of biological role, part of the phosphoribosylformylglycinamidine synthase complex involved in the purines biosynthetic pathway. Catalyzes the ATP-dependent conversion of formylglycinamide ribonucleotide (FGAR) and glutamine to yield formylglycinamidine ribonucleotide (FGAM) and glutamate. The FGAM synthase complex is composed of three subunits. PurQ produces an ammonia molecule by converting glutamine to glutamate. PurL transfers the ammonia molecule to FGAR to form FGAM in an ATP-dependent manner. PurS interacts with PurQ and PurL and is thought to assist in the transfer of the ammonia molecule from PurQ to PurL. This chain is Phosphoribosylformylglycinamidine synthase subunit PurL, found in Enterococcus faecalis (strain ATCC 700802 / V583).